The primary structure comprises 254 residues: Phosphoribosylaminoimidazole-succinocarboxamide synthase (254 aa).

The protein belongs to the SAICAR synthetase family.

The catalysed reaction is 5-amino-1-(5-phospho-D-ribosyl)imidazole-4-carboxylate + L-aspartate + ATP = (2S)-2-[5-amino-1-(5-phospho-beta-D-ribosyl)imidazole-4-carboxamido]succinate + ADP + phosphate + 2 H(+). The protein operates within purine metabolism; IMP biosynthesis via de novo pathway; 5-amino-1-(5-phospho-D-ribosyl)imidazole-4-carboxamide from 5-amino-1-(5-phospho-D-ribosyl)imidazole-4-carboxylate: step 1/2. This is Phosphoribosylaminoimidazole-succinocarboxamide synthase from Brucella abortus (strain S19).